A 285-amino-acid chain; its full sequence is Bifunctional protein FolD (285 aa).

NADP(+) contacts are provided by residues Gly-164–Ser-166, Ser-193, and Ile-234.

Belongs to the tetrahydrofolate dehydrogenase/cyclohydrolase family. Homodimer.

The enzyme catalyses (6R)-5,10-methylene-5,6,7,8-tetrahydrofolate + NADP(+) = (6R)-5,10-methenyltetrahydrofolate + NADPH. It carries out the reaction (6R)-5,10-methenyltetrahydrofolate + H2O = (6R)-10-formyltetrahydrofolate + H(+). Its pathway is one-carbon metabolism; tetrahydrofolate interconversion. Catalyzes the oxidation of 5,10-methylenetetrahydrofolate to 5,10-methenyltetrahydrofolate and then the hydrolysis of 5,10-methenyltetrahydrofolate to 10-formyltetrahydrofolate. This Desulfovibrio desulfuricans (strain ATCC 27774 / DSM 6949 / MB) protein is Bifunctional protein FolD.